Reading from the N-terminus, the 122-residue chain is Large ribosomal subunit protein uL14 (122 aa).

The protein belongs to the universal ribosomal protein uL14 family. Part of the 50S ribosomal subunit. Forms a cluster with proteins L3 and L19. In the 70S ribosome, L14 and L19 interact and together make contacts with the 16S rRNA in bridges B5 and B8.

Its function is as follows. Binds to 23S rRNA. Forms part of two intersubunit bridges in the 70S ribosome. The polypeptide is Large ribosomal subunit protein uL14 (Nitratidesulfovibrio vulgaris (strain ATCC 29579 / DSM 644 / CCUG 34227 / NCIMB 8303 / VKM B-1760 / Hildenborough) (Desulfovibrio vulgaris)).